The primary structure comprises 235 residues: Carboxy-S-adenosyl-L-methionine synthase (235 aa).

S-adenosyl-L-methionine is bound by residues tyrosine 35, 60–62 (GCS), 83–84 (DN), asparagine 124, and arginine 191.

It belongs to the class I-like SAM-binding methyltransferase superfamily. Cx-SAM synthase family. As to quaternary structure, homodimer.

The enzyme catalyses prephenate + S-adenosyl-L-methionine = carboxy-S-adenosyl-L-methionine + 3-phenylpyruvate + H2O. Functionally, catalyzes the conversion of S-adenosyl-L-methionine (SAM) to carboxy-S-adenosyl-L-methionine (Cx-SAM). In Campylobacter jejuni subsp. jejuni serotype O:23/36 (strain 81-176), this protein is Carboxy-S-adenosyl-L-methionine synthase.